The chain runs to 75 residues: Protein B (75 aa).

This chain is Protein B, found in Dicentrarchus labrax (European seabass).